The chain runs to 243 residues: Carboxy-S-adenosyl-L-methionine synthase (243 aa).

Residues tyrosine 40, 65–67, 90–91, 118–119, asparagine 133, and arginine 200 each bind S-adenosyl-L-methionine; these read GCS, DN, and DI.

It belongs to the class I-like SAM-binding methyltransferase superfamily. Cx-SAM synthase family. Homodimer.

It catalyses the reaction prephenate + S-adenosyl-L-methionine = carboxy-S-adenosyl-L-methionine + 3-phenylpyruvate + H2O. Its function is as follows. Catalyzes the conversion of S-adenosyl-L-methionine (SAM) to carboxy-S-adenosyl-L-methionine (Cx-SAM). The chain is Carboxy-S-adenosyl-L-methionine synthase from Shewanella baltica (strain OS223).